A 608-amino-acid chain; its full sequence is Sensor protein kinase WalK (608 aa).

2 helical membrane-spanning segments follow: residues 14–34 and 183–203; these read LVIV…LYFT and IFIV…FFIA. The HAMP domain maps to 204-256; the sequence is RTITKPITDMRNQTVEMSRGNYTQRVKIYGNDEIGELALAFNNLSKRVQEAQA. The region spanning 261–331 is the PAS domain; it reads EKRRLDSVIT…EIQENNDSFL (71 aa). Zn(2+) contacts are provided by His-271, Asp-274, His-364, and Glu-368. The region spanning 314–378 is the PAC domain; the sequence is LEDEFKLEEI…QQQVERERRE (65 aa). The region spanning 382–600 is the Histidine kinase domain; it reads NVSHELRTPL…SIFITLPCEV (219 aa). The residue at position 385 (His-385) is a Phosphohistidine; by autocatalysis.

Forms homodimers. Forms homooligomers. Autophosphorylated.

It localises to the cell membrane. It carries out the reaction ATP + protein L-histidine = ADP + protein N-phospho-L-histidine.. By zinc. Zinc-binding negatively regulates WalK kinase activity and thus autophosphorylation. In terms of biological role, member of the two-component regulatory system WalK/WalR that regulates genes involved in cell wall metabolism, virulence regulation, biofilm production, oxidative stress resistance and antibiotic resistance via direct or indirect regulation of autolysins. Functions as a sensor protein kinase which is autophosphorylated at a histidine residue in the dimerization domain and transfers its phosphate group to the conserved aspartic acid residue in the regulatory domain of WalR. In turn, WalR binds to the upstream promoter regions of the target genes to positively and negatively regulate their expression. The sequence is that of Sensor protein kinase WalK (walK) from Staphylococcus aureus (strain Newman).